The following is a 79-amino-acid chain: uncharacterized protein (79 aa).

A signal peptide spans 1–33 (MRLSIRAIVLFALVWIGLLMSGYGVLVGSKVNA).

This is an uncharacterized protein from Salmonella paratyphi A (strain ATCC 9150 / SARB42).